Here is a 294-residue protein sequence, read N- to C-terminus: Nucleotide-binding protein Smal_0950 (294 aa).

16-23 (GLSGSGKS) serves as a coordination point for ATP. A GTP-binding site is contributed by 69–72 (DVRG).

It belongs to the RapZ-like family.

Its function is as follows. Displays ATPase and GTPase activities. This chain is Nucleotide-binding protein Smal_0950, found in Stenotrophomonas maltophilia (strain R551-3).